The sequence spans 359 residues: Peptide chain release factor 1 (359 aa).

Gln-236 is modified (N5-methylglutamine).

The protein belongs to the prokaryotic/mitochondrial release factor family. In terms of processing, methylated by PrmC. Methylation increases the termination efficiency of RF1.

The protein localises to the cytoplasm. Peptide chain release factor 1 directs the termination of translation in response to the peptide chain termination codons UAG and UAA. The polypeptide is Peptide chain release factor 1 (Streptococcus agalactiae).